We begin with the raw amino-acid sequence, 485 residues long: L-ornithine N(5)-oxygenase (485 aa).

FAD is bound by residues 49–57 (ERQQQFVWH) and Q68. Position 73 (K73) interacts with L-ornithine. V134 serves as a coordination point for FAD. Residue R243 participates in NADP(+) binding. L-ornithine-binding positions include 257-260 (NEIF) and N287. 287–289 (NYS) serves as a coordination point for NADP(+). Residue 425–427 (TLL) participates in FAD binding. S428 is an L-ornithine binding site.

The protein belongs to the lysine N(6)-hydroxylase/L-ornithine N(5)-oxygenase family. Homotetramer. It depends on FAD as a cofactor.

The enzyme catalyses L-ornithine + NADH + O2 = N(5)-hydroxy-L-ornithine + NAD(+) + H2O. It carries out the reaction L-ornithine + NADPH + O2 = N(5)-hydroxy-L-ornithine + NADP(+) + H2O. The protein operates within siderophore biosynthesis. In terms of biological role, L-ornithine N(5)-oxygenase; part of the gene cluster that mediates the biosynthesis of desferriferrichrome that chelates Fe(3+) to form ferrichrome. Fe(3+) is a key factor for induction of trap formation and the fungus uses the iron chelating desferriferrichrome to sequester Fe(3+) to inhibit trap formation and increase nematicidal activity. The biosynthesis of desferriferrichrome requires the action of the L-ornithine N(5)-oxygenase (LOO) Ao414 that hydroxylates L-ornithine at N(5), resulting in the formation of N(5)-hydroxyl-L-ornithine, which is subsequently N-acetylated to yield N(5)-acetyl-N(5)-hydroxy-L-ornithine (L-AHO). L-AHO harbors one hydroxamate moiety, which is the key core responsible for chelating iron. Then, L-AHO is further condensated with glycines to form desferriferrichrome through the NRPS protein Ao415. The protein is L-ornithine N(5)-oxygenase of Arthrobotrys oligospora (strain ATCC 24927 / CBS 115.81 / DSM 1491) (Nematode-trapping fungus).